Consider the following 340-residue polypeptide: tRNA N6-adenosine threonylcarbamoyltransferase (340 aa).

2 residues coordinate Fe cation: His-114 and His-118. Substrate-binding positions include 140 to 144, Asp-173, Gly-186, Asp-190, and Asn-281; that span reads TISGG. Asp-309 contacts Fe cation.

It belongs to the KAE1 / TsaD family. It depends on Fe(2+) as a cofactor.

It is found in the cytoplasm. The catalysed reaction is L-threonylcarbamoyladenylate + adenosine(37) in tRNA = N(6)-L-threonylcarbamoyladenosine(37) in tRNA + AMP + H(+). Functionally, required for the formation of a threonylcarbamoyl group on adenosine at position 37 (t(6)A37) in tRNAs that read codons beginning with adenine. Is involved in the transfer of the threonylcarbamoyl moiety of threonylcarbamoyl-AMP (TC-AMP) to the N6 group of A37, together with TsaE and TsaB. TsaD likely plays a direct catalytic role in this reaction. In Christiangramia forsetii (strain DSM 17595 / CGMCC 1.15422 / KT0803) (Gramella forsetii), this protein is tRNA N6-adenosine threonylcarbamoyltransferase.